Here is an 81-residue protein sequence, read N- to C-terminus: ATP synthase subunit c, chloroplastic (81 aa).

The next 2 helical transmembrane spans lie at 3–23 and 57–77; these read AIVS…AAIG and LAFM…LLFA.

The protein belongs to the ATPase C chain family. As to quaternary structure, F-type ATPases have 2 components, F(1) - the catalytic core - and F(0) - the membrane proton channel. F(1) has five subunits: alpha(3), beta(3), gamma(1), delta(1), epsilon(1). F(0) has four main subunits: a(1), b(1), b'(1) and c(10-14). The alpha and beta chains form an alternating ring which encloses part of the gamma chain. F(1) is attached to F(0) by a central stalk formed by the gamma and epsilon chains, while a peripheral stalk is formed by the delta, b and b' chains.

It is found in the plastid. The protein localises to the chloroplast thylakoid membrane. Its function is as follows. F(1)F(0) ATP synthase produces ATP from ADP in the presence of a proton or sodium gradient. F-type ATPases consist of two structural domains, F(1) containing the extramembraneous catalytic core and F(0) containing the membrane proton channel, linked together by a central stalk and a peripheral stalk. During catalysis, ATP synthesis in the catalytic domain of F(1) is coupled via a rotary mechanism of the central stalk subunits to proton translocation. Functionally, key component of the F(0) channel; it plays a direct role in translocation across the membrane. A homomeric c-ring of between 10-14 subunits forms the central stalk rotor element with the F(1) delta and epsilon subunits. The polypeptide is ATP synthase subunit c, chloroplastic (Cyanidioschyzon merolae (strain NIES-3377 / 10D) (Unicellular red alga)).